A 150-amino-acid chain; its full sequence is UPF0178 protein Daro_2879 (150 aa).

Belongs to the UPF0178 family.

The protein is UPF0178 protein Daro_2879 of Dechloromonas aromatica (strain RCB).